A 111-amino-acid polypeptide reads, in one-letter code: 2Fe-2S ferredoxin (111 aa).

Residues 5-107 enclose the 2Fe-2S ferredoxin-type domain; sequence IKVTFVINNG…GIKVRLPSAT (103 aa). [2Fe-2S] cluster is bound by residues Cys-42, Cys-48, Cys-51, and Cys-88.

The protein belongs to the adrenodoxin/putidaredoxin family. [2Fe-2S] cluster serves as cofactor.

Functionally, ferredoxin are iron-sulfur proteins that transfer electrons in a wide variety of metabolic reactions. The chain is 2Fe-2S ferredoxin (fdxB) from Rickettsia bellii (strain RML369-C).